The primary structure comprises 571 residues: Potassium-transporting ATPase potassium-binding subunit (571 aa).

The next 12 helical transmembrane spans lie at 5–25 (LAAG…YVPV), 60–80 (YGYA…LYAL), 86–106 (VLPL…NTAV), 131–151 (GLAV…VALI), 177–197 (ILLP…VIQS), 247–267 (PTPV…VSLT), 291–311 (LTLL…TLAA), 334–354 (FGIP…TGAV), 386–406 (GLYG…LLVG), 425–445 (ALSV…TVIL), 498–518 (ALGL…LALA), and 547–567 (GTVV…GPIA).

It belongs to the KdpA family. As to quaternary structure, the system is composed of three essential subunits: KdpA, KdpB and KdpC.

The protein localises to the cell membrane. Part of the high-affinity ATP-driven potassium transport (or Kdp) system, which catalyzes the hydrolysis of ATP coupled with the electrogenic transport of potassium into the cytoplasm. This subunit binds the extracellular potassium ions and delivers the ions to the membrane domain of KdpB through an intramembrane tunnel. The sequence is that of Potassium-transporting ATPase potassium-binding subunit from Rhodococcus jostii (strain RHA1).